A 304-amino-acid chain; its full sequence is Probable 5-dehydro-4-deoxyglucarate dehydratase (304 aa).

It belongs to the DapA family.

The enzyme catalyses 5-dehydro-4-deoxy-D-glucarate + H(+) = 2,5-dioxopentanoate + CO2 + H2O. It functions in the pathway carbohydrate acid metabolism; D-glucarate degradation; 2,5-dioxopentanoate from D-glucarate: step 2/2. This is Probable 5-dehydro-4-deoxyglucarate dehydratase from Rhodococcus opacus (strain B4).